The sequence spans 124 residues: MRGFRPLLSLLLPLSACFPLLDRRGPTDIGDIGARMNWAQLAEGHPPNSVQNPQPQALLVVAREQQASHREHTGFRLGRQDGSSEAAGFLPADSEKASGPLGTLAEELSSYSRRKGGFSFRFGR.

Residues 1–17 form the signal peptide; the sequence is MRGFRPLLSLLLPLSAC. The propeptide occupies 18 to 79; it reads FPLLDRRGPT…REHTGFRLGR (62 aa). Residues 63–101 are disordered; that stretch reads REQQASHREHTGFRLGRQDGSSEAAGFLPADSEKASGPL. Phenylalanine amide is present on Phe-122.

Belongs to the RFamide neuropeptide family. Ligand for the G-protein coupled receptor QRFPR/GPR103. Expressed in the brain with highest levels in the periventricular hypothalamic nucleus and lateral hypothalamic areas. Expressed at moderate levels in the adrenal gland, eye, heart, intestine, liver, lung, kidney, mesenteric lymph node, ovary, placenta, Peyer patches, skin, spleen, stomach, testis, thymus and uterus.

The protein localises to the secreted. Its function is as follows. Stimulates feeding and grooming behavior, metabolic rate and locomotor activity and increases blood pressure. May have orexigenic activity. May promote aldosterone secretion by the adrenal gland. The polypeptide is Orexigenic neuropeptide QRFP (Mus musculus (Mouse)).